The following is a 292-amino-acid chain: Pantothenate synthetase (292 aa).

An ATP-binding site is contributed by Met-30–His-37. Catalysis depends on His-37, which acts as the Proton donor. Residue Gln-61 participates in (R)-pantoate binding. Gln-61 lines the beta-alanine pocket. Gly-147 to Asp-150 contributes to the ATP binding site. Gln-153 contacts (R)-pantoate. Val-184 to Arg-187 is a binding site for ATP.

The protein belongs to the pantothenate synthetase family. As to quaternary structure, homodimer.

The protein resides in the cytoplasm. The catalysed reaction is (R)-pantoate + beta-alanine + ATP = (R)-pantothenate + AMP + diphosphate + H(+). Its pathway is cofactor biosynthesis; (R)-pantothenate biosynthesis; (R)-pantothenate from (R)-pantoate and beta-alanine: step 1/1. Catalyzes the condensation of pantoate with beta-alanine in an ATP-dependent reaction via a pantoyl-adenylate intermediate. The polypeptide is Pantothenate synthetase (Chlorobium phaeovibrioides (strain DSM 265 / 1930) (Prosthecochloris vibrioformis (strain DSM 265))).